The sequence spans 79 residues: Probable Fe(2+)-trafficking protein (79 aa).

The protein belongs to the Fe(2+)-trafficking protein family. Monomer.

Could be a mediator in iron transactions between iron acquisition and iron-requiring processes, such as synthesis and/or repair of Fe-S clusters in biosynthetic enzymes. This Blochmanniella floridana protein is Probable Fe(2+)-trafficking protein.